The chain runs to 433 residues: Serine--tRNA ligase (433 aa).

235–237 (TSE) contributes to the L-serine binding site. An ATP-binding site is contributed by 266 to 268 (RSE). Residue Glu289 coordinates L-serine. ATP is bound at residue 353–356 (EISS). Ser388 contributes to the L-serine binding site.

It belongs to the class-II aminoacyl-tRNA synthetase family. Type-1 seryl-tRNA synthetase subfamily. Homodimer. The tRNA molecule binds across the dimer.

The protein localises to the cytoplasm. It catalyses the reaction tRNA(Ser) + L-serine + ATP = L-seryl-tRNA(Ser) + AMP + diphosphate + H(+). The enzyme catalyses tRNA(Sec) + L-serine + ATP = L-seryl-tRNA(Sec) + AMP + diphosphate + H(+). It functions in the pathway aminoacyl-tRNA biosynthesis; selenocysteinyl-tRNA(Sec) biosynthesis; L-seryl-tRNA(Sec) from L-serine and tRNA(Sec): step 1/1. Functionally, catalyzes the attachment of serine to tRNA(Ser). Is also able to aminoacylate tRNA(Sec) with serine, to form the misacylated tRNA L-seryl-tRNA(Sec), which will be further converted into selenocysteinyl-tRNA(Sec). The chain is Serine--tRNA ligase from Burkholderia vietnamiensis (strain G4 / LMG 22486) (Burkholderia cepacia (strain R1808)).